Consider the following 376-residue polypeptide: Queuine tRNA-ribosyltransferase (376 aa).

The active-site Proton acceptor is aspartate 93. Substrate is bound by residues 93 to 97, aspartate 147, glutamine 190, and glycine 217; that span reads DSGGF. The tract at residues 248-254 is RNA binding; sequence GVGKPDD. The Nucleophile role is filled by aspartate 267. Zn(2+)-binding residues include cysteine 305, cysteine 307, cysteine 310, and histidine 336.

The protein belongs to the queuine tRNA-ribosyltransferase family. In terms of assembly, homodimer. Within each dimer, one monomer is responsible for RNA recognition and catalysis, while the other monomer binds to the replacement base PreQ1. Zn(2+) serves as cofactor.

The enzyme catalyses 7-aminomethyl-7-carbaguanine + guanosine(34) in tRNA = 7-aminomethyl-7-carbaguanosine(34) in tRNA + guanine. It participates in tRNA modification; tRNA-queuosine biosynthesis. Functionally, catalyzes the base-exchange of a guanine (G) residue with the queuine precursor 7-aminomethyl-7-deazaguanine (PreQ1) at position 34 (anticodon wobble position) in tRNAs with GU(N) anticodons (tRNA-Asp, -Asn, -His and -Tyr). Catalysis occurs through a double-displacement mechanism. The nucleophile active site attacks the C1' of nucleotide 34 to detach the guanine base from the RNA, forming a covalent enzyme-RNA intermediate. The proton acceptor active site deprotonates the incoming PreQ1, allowing a nucleophilic attack on the C1' of the ribose to form the product. After dissociation, two additional enzymatic reactions on the tRNA convert PreQ1 to queuine (Q), resulting in the hypermodified nucleoside queuosine (7-(((4,5-cis-dihydroxy-2-cyclopenten-1-yl)amino)methyl)-7-deazaguanosine). The protein is Queuine tRNA-ribosyltransferase of Ruegeria sp. (strain TM1040) (Silicibacter sp.).